The primary structure comprises 1663 residues: MGPTSGSQLLVLLLLLASSLLALGSPMYSIITPNVLRLESEETFILEAHDAQGDVPVTVTVQDFLKKQVLTSEKTVLTGATGHLNRVFIKIPASKEFNADKGHKYVTVVANFGATVVEKAVLVSFQSGYLFIQTDKTIYTPGSTVFYRIFTVDNNLLPVGKTVVIVIETPDGVPIKRDILSSHNQYGILPLSWNIPELVNMGQWKIRAFYEHAPKQTFSAEFEVKEYVLPSFEVLVEPTEKFYYIHGPKGLEVSITARFLYGKNVDGTAFVIFGVQDEDKKISLALSLTRVLIEDGSGEAVLSRKVLMDGVRPSSPEALVGKSLYVSVTVILHSGSDMVEAERSGIPIVTSPYQIHFTKTPKFFKPAMPFDLMVFVTNPDGSPARRVPVVTQGSDAQALTQDDGVAKLSVNTPNNRQPLTITVSTKKEGIPDARQATRTMQAQPYSTMHNSNNYLHLSVSRVELKPGDNLNVNFHLRTDAGQEAKIRYYTYLVMNKGKLLKAGRQVREPGQDLVVLSLPITPEFIPSFRLVAYYTLIGANGQREVVADSVWVDVKDSCVGTLVVKGDPRDNRQPAPGHQTTLRIEGNQGARVGLVAVDKGVFVLNKKNKLTQSKIWDVVEKADIGCTPGSGKNYAGVFMDAGLTFKTNQGLQTDQREDPECAKPAARRRRSVQLMERRMDKAGQYTDKGLRKCCEDGMRDIPMPYSCQRRARLITQGESCLKAFMDCCNYITKLREQHRRDHVLGLARSDVDEDIIPEEDIISRSHFPESWLWTIEELKEPEKNGISTKVMNIFLKDSITTWEILAVSLSDKKGICVADPYEITVMQDFFIDLRLPYSVVRNEQVEIRAVLFNYREQEKLKVRVELLHNPAFCSMATAKKRYYQTIEIPPKSSVAVPYVIVPLKIGLQEVEVKAAVFNHFISDGVKKILKVVPEGMRVNKTVAVRTLDPEHLNQGGVQREDVNAADLSDQVPDTDSETRILLQGTPVAQMAEDAVDGERLKHLIVTPSGCGEQNMIGMTPTVIAVHYLDQTEQWEKFGLEKRQEALELIKKGYTQQLAFKQPISAYAAFNNRPPSTWLTAMWSRSFSLAANLIAIDSQVLCGAVKWLILEKQKPDGVFQEDGPVIHQEMIGGFRNTKEADVSLTAFVLIALQEARDICEGQVNSLPGSINKAGEYLEASYLNLQRPYTVAIAGYALALMNKLEEPYLTKFLNTAKDRNRWEEPGQQLYNVEATSYALLALLLLKDFDSVPPVVRWLNDERYYGGGYGSTQATFMVFQALAQYRADVPDHKDLNMDVSLHLPSRSSPTVFRLLWESGSLLRSEETKQNEGFSLTAKGKGQGTLSVVTVYHAKVKGKTTCKKFDLRVTIKPAPETAKKPQDAKSSMILDICTRYLGDVDATMSILDISMMTGFIPDTNDLELLSSGVDRYISKYEMDKAFSNKNTLIIYLEKISHSEEDCLSFKVHQFFNVGLIQPGSVKVYSYYNLEESCTRFYHPEKDDGMLSKLCHNEMCRCAEENCFMHQSQDQVSLNERLDKACEPGVDYVYKTKLTTIELSDDFDEYIMTIEQVIKSGSDEVQAGQERRFISHVKCRNALKLQKGKQYLMWGLSSDLWGEKPNTSYIIGKDTWVEHWPEAEERQDQKNQKQCEDLGAFTETMVVFGCPN.

Residues 1-24 (MGPTSGSQLLVLLLLLASSLLALG) form the signal peptide. A phosphoserine mark is found at Ser-40, Ser-297, and Ser-303. Cystine bridges form between Cys-558-Cys-816, Cys-626-Cys-661, Cys-693-Cys-720, Cys-694-Cys-727, Cys-707-Cys-728, Cys-873-Cys-1513, Cys-1101-Cys-1158, Cys-1358-Cys-1489, Cys-1389-Cys-1458, Cys-1506-Cys-1511, Cys-1518-Cys-1590, and Cys-1537-Cys-1661. At Ser-671 the chain carries Phosphoserine. Residues 693–728 (CCEDGMRDIPMPYSCQRRARLITQGESCLKAFMDCC) form the Anaphylatoxin-like domain. Asn-939 carries an N-linked (GlcNAc...) asparagine glycan. Phosphoserine is present on Ser-968. Residues 1010–1013 (CGEQ) constitute a cross-link (isoglutamyl cysteine thioester (Cys-Gln)). Ser-1321 is subject to Phosphoserine. The NTR domain maps to 1518–1661 (CFMHQSQDQV…FTETMVVFGC (144 aa)). At Ser-1573 the chain carries Phosphoserine. Residue Asn-1617 is glycosylated (N-linked (GlcNAc...) asparagine). Positions 1634–1659 (AEERQDQKNQKQCEDLGAFTETMVVF) are interaction with CFP/properdin.

As to quaternary structure, in absence of complement activation, the C3 precursor is first processed by the removal of 4 Arg residues, forming two chains, beta and alpha, linked by a disulfide bond. Complement C3b is composed of complement C3b and complement C3 beta chains that are associated via disulfide bonds. Non-enzymatic component of the C5 convertase, also named C4bC2bC3b, composed of the serine protease complement C2b (C2), complement C3b, as well as complement C4b (C4). Non-enzymatic component of the C5 convertase of the alternative complement pathways composed of the serine protease complement CFB and complement C3b. Interacts with CFP; interaction takes place together with CFB in the alternative complement system and allows the complex to become active. Interacts with CR1 (via Sushi 8 and Sushi 9 domains). Interacts with CFH. In terms of assembly, interacts with CFH. Interacts with CR2. As to quaternary structure, during pregnancy, C3dg exists as a complex (probably a 2:2:2 heterohexamer) with AGT and the proform of PRG2. Interacts with CR2 (via the N-terminal Sushi domains 1 and 2). C3 precursor is first processed by the removal of 4 Arg residues, forming two chains, beta and alpha, linked by a disulfide bond. During activation of the complement systems, the alpha chain is cleaved into C3a and C3b by the C3 convertase: C3b stays linked to the beta chain, while C3a is released in the plasma. The alpha chain is cleaved by the serine protease complement C2b component of the C3 convertase to generate C3a and C3b following activation by the classical, lectin and GZMK complement systems. The alpha chain is cleaved by CFB component of the C3 convertase to generate C3a and C3b following activation by the alternative complement system. Post-translationally, C3a is further processed by carboxypeptidases to release the C-terminal arginine residue generating the acylation stimulating protein (ASP). Levels of ASP are increased in adipocytes in the postprandial period and by insulin and dietary chylomicrons. In terms of processing, complement C3b is rapidly split in two positions by factor I (CFI) and a cofactor (CFH) to form iC3b (inactivated C3b) and C3f which is released. CFI and CFH catalyze proteolytic degradation of already-deposited complement C3b. Then iC3b is slowly cleaved (possibly by CFI) to form C3c (beta chain + alpha' chain fragment 1 + alpha' chain fragment 2), C3dg and C3f. Other proteases produce other fragments such as C3d or C3g. Upon activation, the internal thioester bond reacts with carbohydrate antigens on the target surface to form amide or ester bonds, leading to covalent association with the surface of pathogens. Post-translationally, complement C3b interacts with complement C4b via a thioester linkage. In terms of processing, phosphorylated by FAM20C in the extracellular medium.

The protein resides in the secreted. The protein localises to the cell surface. Its activity is regulated as follows. Complement activation is inhibited by VSIG4. In terms of biological role, precursor of non-enzymatic components of the classical, alternative, lectin and GZMK complement pathways, which consist in a cascade of proteins that leads to phagocytosis and breakdown of pathogens and signaling that strengthens the adaptive immune system. Non-enzymatic component of C5 convertase. Generated following cleavage by C3 convertase, it covalently attaches to the surface of pathogens, where it acts as an opsonin that marks the surface of antigens for removal. Complement C3b binds covalently via its reactive thioester, to cell surface carbohydrates or immune aggregates. Together with complement C4b, it then recruits the serine protease complement C2b to form the C5 convertase, which cleaves and activate C5, the next component of the complement pathways. In the alternative complement pathway, recruits the serine protease CFB to form the C5 convertase that cleaves and activates C5. Functionally, mediator of local inflammatory process released following cleavage by C3 convertase. Acts by binding to its receptor, C3AR1, activating G protein-coupled receptor signaling, promoting the phosphorylation, ARRB2-mediated internalization and endocytosis of C3AR1. C3a anaphylatoxin stimulates the activation of immune cells such as mast cells and basophilic leukocytes to release inflammation agents, such as cytokines, chemokines and histamine, which promote inflammation development. Also acts as potent chemoattractant for the migration of macrophages and neutrophils to the inflamed tissues, resulting in neutralization of the inflammatory triggers by multiple ways, such as phagocytosis and generation of reactive oxidants. Its function is as follows. Adipogenic hormone that stimulates triglyceride synthesis and glucose transport in adipocytes, regulating fat storage and playing a role in postprandial triglyceride clearance. Appears to stimulate triglyceride synthesis via activation of the PLC, MAPK and AKT signaling pathways. Acts by binding to its receptor, C5AR2, activating G protein-coupled receptor signaling, promoting the phosphorylation, ARRB2-mediated internalization and endocytosis of C5AR2. In terms of biological role, acts as a chemoattractant for neutrophils in chronic inflammation. The chain is Complement C3 (C3) from Rattus norvegicus (Rat).